The following is a 319-amino-acid chain: MGLCKCPKRKVTNLFCYEHRVNVCEFCLVDNHPNCVVQSYLNWLTDQDYDPNCSLCHTTLTQGETIRLNCLHLLHWRCFDDWAASFPPTTAPAGYRCPCCSQEVFPPINEVSPLIEKLREQLKQSNWARNALGLPVLPELNRPVKNIAPIPPPPPPQVKHVSYDDSPAQKEIPIHHNRSETPATHLEMEDTASYSVSNSDVTFARKKNFASESSSDTRPLLRQDRDADNEENKYKRRPTIDWMRGLWRAKHGTGVPEDRTSGRKMAIFVMFLALLALITIITVLKRAGYNGEHSSDPMFDPMANPNIRVAVDDSRLPHL.

The B box-type; degenerate zinc-finger motif lies at 1-43 (MGLCKCPKRKVTNLFCYEHRVNVCEFCLVDNHPNCVVQSYLNW). The RING-type; atypical zinc-finger motif lies at 53–101 (CSLCHTTLTQGETIRLNCLHLLHWRCFDDWAASFPPTTAPAGYRCPCCS). Residues 212-232 (ESSSDTRPLLRQDRDADNEEN) are disordered. The span at 219–232 (PLLRQDRDADNEEN) shows a compositional bias: basic and acidic residues. Residues 264–284 (KMAIFVMFLALLALITIITVL) form a helical membrane-spanning segment.

This sequence belongs to the ZFPL1 family.

The protein resides in the membrane. This Caenorhabditis briggsae protein is Zinc finger protein-like 1 homolog.